The following is a 388-amino-acid chain: Na(+)/H(+) antiporter NhaA (388 aa).

Helical transmembrane passes span 8-28, 57-77, 93-113, 123-143, 152-172, 175-195, 210-230, 254-274, 278-298, 328-348, and 361-381; these read FFSA…LGLL, LAEF…IAEI, ILPL…YGLI, GWAI…LALG, VWLM…IALF, SHLN…MIGL, GVVL…AGVI, IIAP…SMGM, AMSF…GLFL, LFGL…IAEL, and YGIL…LRFL.

Belongs to the NhaA Na(+)/H(+) (TC 2.A.33) antiporter family.

Its subcellular location is the cell inner membrane. It carries out the reaction Na(+)(in) + 2 H(+)(out) = Na(+)(out) + 2 H(+)(in). Its function is as follows. Na(+)/H(+) antiporter that extrudes sodium in exchange for external protons. This Zymomonas mobilis subsp. mobilis (strain ATCC 31821 / ZM4 / CP4) protein is Na(+)/H(+) antiporter NhaA.